The primary structure comprises 444 residues: E1B 55 kDa protein (444 aa).

The disordered stretch occupies residues 1 to 27; the sequence is MEQDSDLESGRATNQRPPRVRVRGAGV. A phosphoserine mark is found at serine 438 and serine 439.

This sequence belongs to the adenoviridae E1B 55 kDa protein family. As to quaternary structure, interacts with host PML-4 and PML-5; this interaction promotes efficient subnuclear targeting of E1B-55K to PML nuclear bodies. Interacts with E4-ORF3 protein. Interacts with E4-ORF6 protein.

It is found in the host nucleus. Its subcellular location is the host cytoplasm. In terms of biological role, plays a major role to prevent cellular inhibition of viral genome replication. Assembles an SCF-like E3 ubiquitin ligase complex based on the cellular proteins ELOB, ELOC, CUL5 and RBX1, in cooperation with viral E4orf6. This viral RING-type ligase ubiquitinates cellular substrates and targets them to proteasomal degradation: TP53/p53, LIG4, MRE11-RAD50-NBS1 (MRN) complex, ITGA3, DAXX and BLM. E1B-55K probably acts as the substrate-specific adapter of the SCF-like E3 ubiquitin ligase complex. Degradation of host TP53/p53 activity is essential for preventing E1A-induced TP53 accumulation that would otherwise lead to cell apoptosis and growth arrest. E1B-55K also inactivates TP53 transcription-factor activity by binding its transactivation domain. E1B-55K also functions as a SUMO1 E3 ligase for TP53 which causes the latter to be sequestered in promyelocytic leukemia (PML) nuclear bodies thereby contributing to maximal inhibition of TP53 function. The chain is E1B 55 kDa protein from Canis lupus familiaris (Dog).